Consider the following 643-residue polypeptide: MEKSSSCESLGSQPAAARPPSVDSLSSASTSHSENSVHTKSASVVSSDSISTSADNFSPDLRVLRESNKLAEMEEPPLLPGENIKDMAKDVTYICPFTGAVRGTLTVTNYRLYFKSMERDPPFVLDASLGVINRVEKIGGASSRGENSYGLETVCKDIRNLRFAHKPEGRTRRSIFENLMKYAFPVSNNLPLFAFEYKEVFPENGWKLYDPLLEYRRQGIPNESWRITKINERYELCDTYPALLVVPANIPDEELKRVASFRSRGRIPVLSWIHPESQATITRCSQPMVGVSGKRSKEDEKYLQAIMDSNAQSHKIFIFDARPSVNAVANKAKGGGYESEDAYQNAELVFLDIHNIHVMRESLRKLKEIVYPNIEETHWLSNLESTHWLEHIKLILAGALRIADKVESGKTSVVVHCSDGWDRTAQLTSLAMLMLDGYYRTIRGFEVLVEKEWLSFGHRFQLRVGHGDKNHADADRSPVFLQFIDCVWQMTRQFPTAFEFNEYFLITILDHLYSCLFGTFLCNSEQQRGKENLPKRTVSLWSYINSQLEDFTNPLYGSYSNHVLYPVASMRHLELWVGYYIRWNPRMKPQEPIHNRYKELLAKRAELQKKVEELQREISNRSTSSSERASSPAQCVTPVQTVV.

2 stretches are compositionally biased toward polar residues: residues 1–12 (MEKSSSCESLGS) and 23–40 (DSLSSASTSHSENSVHTK). The segment at 1–56 (MEKSSSCESLGSQPAAARPPSVDSLSSASTSHSENSVHTKSASVVSSDSISTSADN) is disordered. Phosphoserine is present on residues Ser6 and Ser9. Low complexity predominate over residues 41 to 55 (SASVVSSDSISTSAD). At Ser58 the chain carries Phosphoserine. Residues 68–139 (NKLAEMEEPP…GVINRVEKIG (72 aa)) form the GRAM domain. A Myotubularin phosphatase domain is found at 205–580 (GWKLYDPLLE…RHLELWVGYY (376 aa)). 3 residues coordinate a 1,2-diacyl-sn-glycero-3-phospho-(1D-myo-inositol-3,5-bisphosphate): Asn330, Asn355, and Ile356. The a 1,2-diacyl-sn-glycero-3-phospho-(1D-myo-inositol-3-phosphate) site is built by Asn330, Asn355, and Ile356. Catalysis depends on Cys417, which acts as the Phosphocysteine intermediate. Ser418, Asp419, Gly420, Trp421, Asp422, Arg423, Arg459, and Arg463 together coordinate a 1,2-diacyl-sn-glycero-3-phospho-(1D-myo-inositol-3,5-bisphosphate). Ser418, Asp419, Gly420, Trp421, Asp422, and Arg423 together coordinate a 1,2-diacyl-sn-glycero-3-phospho-(1D-myo-inositol-3-phosphate). A 1,2-diacyl-sn-glycero-3-phospho-(1D-myo-inositol-3-phosphate) is bound at residue Arg463. Positions 593–627 (IHNRYKELLAKRAELQKKVEELQREISNRSTSSSE) form a coiled coil. The tract at residues 615–643 (QREISNRSTSSSERASSPAQCVTPVQTVV) is disordered. Residues 620–631 (NRSTSSSERASS) are compositionally biased toward low complexity. Over residues 632-643 (PAQCVTPVQTVV) the composition is skewed to polar residues.

This sequence belongs to the protein-tyrosine phosphatase family. Non-receptor class myotubularin subfamily. Homodimer (via coiled-coil domain). Heterotetramer consisting of one MTMR2 dimer and one SBF2/MTMR13 dimer; specifically in peripheral nerves stabilizes SBF2/MTMR13 at the membranes and increases MTMR2 catalytic activity towards phosphatidylinositol 3,5-bisphosphate and to a lesser extent towards phosphatidylinositol 3-phosphate. Heterodimer with SBF1/MTMR5; acts as an adapter for the phosphatase MTMR2 to regulate MTMR2 catalytic activity and subcellular location. Heterodimer with MTMR12. In terms of processing, phosphorylation at Ser-58 decreases MTMR2 localization to endocytic vesicular structures.

It is found in the cytoplasm. It localises to the early endosome membrane. The protein resides in the perinuclear region. Its subcellular location is the cell projection. The protein localises to the axon. It is found in the endosome membrane. It carries out the reaction a 1,2-diacyl-sn-glycero-3-phospho-(1D-myo-inositol-3,5-bisphosphate) + H2O = a 1,2-diacyl-sn-glycero-3-phospho-(1D-myo-inositol-5-phosphate) + phosphate. The enzyme catalyses a 1,2-diacyl-sn-glycero-3-phospho-(1D-myo-inositol-3-phosphate) + H2O = a 1,2-diacyl-sn-glycero-3-phospho-(1D-myo-inositol) + phosphate. It catalyses the reaction 1,2-dioctanoyl-sn-glycero-3-phospho-(1-D-myo-inositol-3-phosphate) + H2O = 1,2-dioctanoyl-sn-glycero-3-phospho-(1D-myo-inositol) + phosphate. The catalysed reaction is 1,2-dioctanoyl-sn-glycero-3-phospho-(1D-myo-inositol-3,5-bisphosphate) + H2O = 1,2-dioctanoyl-sn-glycero-3-phospho-(1D-myo-inositol-5-phosphate) + phosphate. In terms of biological role, lipid phosphatase that specifically dephosphorylates the D-3 position of phosphatidylinositol 3-phosphate and phosphatidylinositol 3,5-bisphosphate, generating phosphatidylinositol and phosphatidylinositol 5-phosphate. Regulates the level of these phosphoinositides critical for various biological processes including autophagy initiation and autophagosome maturation. This Homo sapiens (Human) protein is Phosphatidylinositol-3,5-bisphosphate 3-phosphatase MTMR2.